Reading from the N-terminus, the 76-residue chain is Putative Fe(2+) transport protein A (76 aa).

This sequence belongs to the FeoA family.

Might be involved in Fe(2+) ion uptake. In Helicobacter pylori (strain ATCC 700392 / 26695) (Campylobacter pylori), this protein is Putative Fe(2+) transport protein A.